The following is a 148-amino-acid chain: Histone H2A-like 3 (148 aa).

The tract at residues 101–128 (DDTHSQVEEMPQSEEEEEEEEEKEEEMV) is disordered. Over residues 111–127 (PQSEEEEEEEEEKEEEM) the composition is skewed to acidic residues.

The protein belongs to the histone H2A family. The nucleosome is a histone octamer containing two molecules each of H2A, H2B, H3 and H4 assembled in one H3-H4 heterotetramer and two H2A-H2B heterodimers. The octamer wraps approximately 147 bp of DNA.

The protein localises to the nucleus. It localises to the chromosome. Functionally, core component of nucleosome. Nucleosomes wrap and compact DNA into chromatin, limiting DNA accessibility to the cellular machineries which require DNA as a template. Histones thereby play a central role in transcription regulation, DNA repair, DNA replication and chromosomal stability. DNA accessibility is regulated via a complex set of post-translational modifications of histones, also called histone code, and nucleosome remodeling. This is Histone H2A-like 3 from Homo sapiens (Human).